A 190-amino-acid chain; its full sequence is DNA-invertase hin (190 aa).

Positions A2 to G135 constitute a Resolvase/invertase-type recombinase catalytic domain. The active-site O-(5'-phospho-DNA)-serine intermediate is S10. A DNA-binding region (H-T-H motif) is located at residues R162–P181.

It belongs to the site-specific recombinase resolvase family.

Functionally, a DNA fragment of approximately 900 base pairs, adjacent to the fljB (H2) gene, which specifies the synthesis of phase-2 flagellin, can exist in either orientation with respect to fljB. The orientation of the inversion region controls expression of fljB. The hin gene occupies about two-thirds of the inversion region; it is required for the inversion of the fljB controlling region. In Salmonella typhimurium (strain LT2 / SGSC1412 / ATCC 700720), this protein is DNA-invertase hin (hin).